The following is a 377-amino-acid chain: cAMP-dependent protein kinase type II regulatory subunit (377 aa).

The span at 48-69 shows a compositional bias: polar residues; sequence ERPSVSHTDQSTDDQLSVNSQD. Residues 48 to 78 are disordered; sequence ERPSVSHTDQSTDDQLSVNSQDADAEPPVMA. Phosphoserine occurs at positions 51, 58, 64, 67, and 84. Residues 81 to 85 carry the Pseudophosphorylation motif motif; sequence RRKSV. At Tyr90 the chain carries Phosphotyrosine. 3',5'-cyclic AMP is bound by residues 124-239, Glu189, Arg198, 242-362, Glu311, and Arg320; these read LFRS…LLNS and MLKA…YESQ.

It belongs to the cAMP-dependent kinase regulatory chain family. Tetramer, composed of 2 regulatory (R) and 2 catalytic (C) subunits. In the presence of cAMP it dissociates into 2 active monomeric C subunits and an R dimer. Interacts with Akap200. In terms of processing, the pseudophosphorylation site binds to the substrate-binding region of the catalytic chain but is not phosphorylated. The physiological significance of phosphorylations by other kinases is unclear. Detected in follicle cells, germline-derived cells, germline line stem cells and outer rim of ring canals of nurse cells throughout oogenesis (at protein level).

Its subcellular location is the cytoplasm. It is found in the cell membrane. In terms of biological role, regulatory subunit of the cAMP-dependent protein kinases involved in cAMP signaling in cells. Mediates membrane association by binding to anchoring proteins, such as Akap200. Might play an essential role in the regulation of neuronal activity in the brain. The sequence is that of cAMP-dependent protein kinase type II regulatory subunit (Pka-R2) from Drosophila melanogaster (Fruit fly).